The sequence spans 565 residues: DNA mismatch repair protein MutL (565 aa).

Belongs to the DNA mismatch repair MutL/HexB family.

In terms of biological role, this protein is involved in the repair of mismatches in DNA. It is required for dam-dependent methyl-directed DNA mismatch repair. May act as a 'molecular matchmaker', a protein that promotes the formation of a stable complex between two or more DNA-binding proteins in an ATP-dependent manner without itself being part of a final effector complex. The protein is DNA mismatch repair protein MutL of Desulforudis audaxviator (strain MP104C).